Consider the following 563-residue polypeptide: Germacrene C/D synthase (563 aa).

The disordered stretch occupies residues 1–22 (MESCLSVSSAPPPKKNIQEPVR). Mg(2+) is bound by residues aspartate 315, aspartate 319, and glutamate 468. The DDXXD motif motif lies at 315 to 319 (DDTYD).

Belongs to the terpene synthase family. Mg(2+) is required as a cofactor. In terms of tissue distribution, predominantly expressed in root.

It carries out the reaction (2E,6E)-farnesyl diphosphate = germacrene C + diphosphate. It catalyses the reaction (2E,6E)-farnesyl diphosphate = (-)-germacrene D + diphosphate. Its function is as follows. Mediates formation of germacrene C and germacrene D using farnesyl diphosphate as substrate. Can also catalyze formation of trace of germacrene B. This Valeriana officinalis (Valerian) protein is Germacrene C/D synthase (TPS1).